The sequence spans 96 residues: UPF0235 protein YpsIP31758_0827 (96 aa).

Belongs to the UPF0235 family.

The polypeptide is UPF0235 protein YpsIP31758_0827 (Yersinia pseudotuberculosis serotype O:1b (strain IP 31758)).